Here is a 447-residue protein sequence, read N- to C-terminus: Trigger factor (447 aa).

The PPIase FKBP-type domain occupies 164 to 249 (GNQVTFDFEG…VKLVEKSKLP (86 aa)).

It belongs to the FKBP-type PPIase family. Tig subfamily.

Its subcellular location is the cytoplasm. The enzyme catalyses [protein]-peptidylproline (omega=180) = [protein]-peptidylproline (omega=0). Functionally, involved in protein export. Acts as a chaperone by maintaining the newly synthesized protein in an open conformation. Functions as a peptidyl-prolyl cis-trans isomerase. In Psychrobacter cryohalolentis (strain ATCC BAA-1226 / DSM 17306 / VKM B-2378 / K5), this protein is Trigger factor.